A 164-amino-acid polypeptide reads, in one-letter code: Axial regulator YABBY 5 (164 aa).

A C4-type zinc finger spans residues C16–C43.

This sequence belongs to the YABBY family. In terms of assembly, binds to LUG and LUH; these complexes promote adaxial cell identity in leaves as well as embryonic shoot apical meristem (SAM) initiation and postembryonic SAM maintenance. Interacts with SPL/NZZ and SPEAR2.

The protein localises to the nucleus. Functionally, promotes adaxial cell identity. Regulates the initiation of embryonic shoot apical meristem (SAM) development. The sequence is that of Axial regulator YABBY 5 (YAB5) from Arabidopsis thaliana (Mouse-ear cress).